The sequence spans 1364 residues: MTTSKPRKPSKAKAAKAAKAAKAALEKISKPLSKTPPPFRNHIIDKKALKNLVAWSFKHHGTAVTSSMADDLKDLGFKYATQAAVSISVDDLKVPAAKKDLLGQAEEQITATEERYRLGEITEVERHTKVIDTWTETNERLVDAVKKNFDENAPLNSVWMMANSGARGNMSQVRQLVGMRGLMANPQGEIIDLPIRTNFREGLTVTEYVISSYGARKGLVDTALRTADSGYLTRRLVDVAQDVIVREDDCGTMRHIVVEAEDSKFAKRLVGRLTAAQVVSAEGEVLAERDTEIDPALSSKIEKAGITAVSIRSPLTCEANRSVCRKCYGWALAHNELVDLGEAVGIIAAQSIGEPGTQLTMRTFHTGGVSTAESGVVRSKVAGDVEFGSKARVRPYRTPHGVEAQQAEVDFTLTIKPSGKGRPQKIDITLGSLLFVDNGQAIESDVTVVQIAAGAVQKSVEKATKDVICDLAGQVHYEDKIQPREVTDRQGNITLKAQRLGRMWVLAGDVYNLPPNALPVVDGKSTVTEGQVLAEASQRSEFGGDVRLRDSIGDSREVQIVTTAMTLKDFKLLEESNHSGELWNLEAKDGTRYRLNTIPGSKIGNGEVIAELADDRFRTGTGGLVKFAPGLAIKKARSAKNGYEVNKGGTLLWVPQETHEINKDISLLMITDGQWIEAGTEVVKDIFSQTAGVVTVTQKNDILREIIVRGGDLRLISDNKALERFEGDGQMVNPGDDVAKGVSVDTMKFVQTVETPEGKGLLLRPVEEYTIPNEAQLPELSHLKQANGPHLGIKATQRLAFKDNELIKSVEGVELLKTQLLLETFDTTPQMTVDVERAPDKRAKTISRLRLVILESILVRRDTMSDSSHGSTHTDLQVEDGISVKAGDVVATTQILCKQEGVVQLPEATEAEPVRRLIVERPEDTTTISTSGKPSVAVGDRVVDGDLLASGQPSDCCGEVEAVDGSSVTLRLGRPYMVSPDSLLHVRDGDLVQRGDGLALLVFERQKTGDIVQGLPRIEELLEARRPRDSAILCRKPGTVEIKQGEDDDSLSVNVIESDDAIGEYPILLGRNVMVNDGQQVTAGELLTDGPINPHELLECFFEDFRSRKPLMDAAQEAIANLQHRLVTEVQNVYKSQGVSIDDKHIEVIVRQMTSKVRVEDAGDTTLLPGELIELRQVEDTNQAMAITGGAPSEFTPVLLGITKASLNTDSFISAASFQETTRVLTEAAIEGKSDWLRGLKENVIIGRLIPAGTGFSGFEEELQKEAGPHPDILSEDPAGYRRMQNLRPDYTVDMPPAASSSALLADPSDADLEATRTRHNIDPSASTNAAFTRPDVDNELKEEQVVDAEAVEGLQEEGLLSDD.

The Zn(2+) site is built by Cys-250, Cys-317, Cys-324, and Cys-327. The segment at Thr-1318–Lys-1342 is disordered.

Belongs to the RNA polymerase beta' chain family. RpoC2 subfamily. In terms of assembly, in cyanobacteria the RNAP catalytic core is composed of 2 alpha, 1 beta, 1 beta', 1 gamma and 1 omega subunit. When a sigma factor is associated with the core the holoenzyme is formed, which can initiate transcription. Zn(2+) is required as a cofactor.

The enzyme catalyses RNA(n) + a ribonucleoside 5'-triphosphate = RNA(n+1) + diphosphate. Functionally, DNA-dependent RNA polymerase catalyzes the transcription of DNA into RNA using the four ribonucleoside triphosphates as substrates. The polypeptide is DNA-directed RNA polymerase subunit beta' (Synechococcus sp. (strain CC9902)).